The following is a 35-amino-acid chain: Phospholipase A2 bitanarin (35 aa).

This sequence belongs to the phospholipase A2 family. Group II subfamily. Monomer. The cofactor is Ca(2+). Contains 14 disulfide bonds. In terms of tissue distribution, expressed by the venom gland.

Its subcellular location is the secreted. It carries out the reaction a 1,2-diacyl-sn-glycero-3-phosphocholine + H2O = a 1-acyl-sn-glycero-3-phosphocholine + a fatty acid + H(+). Snake venom phospholipase A2 (PLA2) that is the first competitive blocker of nicotinic acetylcholine receptors (nAChRs). Competes with alpha-bungarotoxin for binding to nAChRs and acetylcholine binding proteins (AChBPs) and blocks acetylcholine-elicited current. PLA2 catalyzes the calcium-dependent hydrolysis of the 2-acyl groups in 3-sn-phosphoglycerides. In Bitis arietans (African puff adder), this protein is Phospholipase A2 bitanarin.